Here is a 335-residue protein sequence, read N- to C-terminus: Coiled-coil domain-containing protein 68 (335 aa).

The stretch at 101–305 (QLLEMNKENE…KTQVALSSET (205 aa)) forms a coiled coil.

As to quaternary structure, interacts with CEP170. In terms of tissue distribution, expressed in bone marrow, colon, small intestine, spleen, testis, trachea and cutaneous T-cell lymphoma (CTCL).

The protein localises to the cytoplasm. Its subcellular location is the cytoskeleton. It is found in the microtubule organizing center. It localises to the centrosome. The protein resides in the centriole. Its function is as follows. Centriolar protein required for centriole subdistal appendage assembly and microtubule anchoring in interphase cells. Together with CCDC120, cooperate with subdistal appendage components ODF2, NIN and CEP170 for hierarchical subdistal appendage assembly. This Homo sapiens (Human) protein is Coiled-coil domain-containing protein 68 (CCDC68).